The chain runs to 503 residues: MAIHVKNNIHWVGQRDWEVRDFHGTEYKTLQGSSYNSYLIREEKTVLIDTVDHKFSRDFVQNLMAEVDLNTIDYIVINHAEEDHAGALSELMARIPNTPIYCTHNAIDSITGHHHHPEWHFHTVKTGDTLDIGNGKQLIFIETPMLHWPDSMMTYMTEDAVLFSNDAFGQHYCDEHLFNDEVDQTELFEQCQRYFANILTPFSRLVTAKIHEVLGFNLPLSMVATSHGVVWRDDPAQIIHLYLKWADSYQEDRITLFYDTMSNNTRMMADAIAQGINDVDPGVAVKIYNVARHDKNEILTQVFRSKGVLVGSSTMNNVMMPKVAAMLEEITGLRFQNKKASAFGSYGWNGGAVDRIQTRLMDAGFETTLALKTKWRPDGSALEICREHGREIARQWALHPLDDTPARRVISPVKQTTVAPQSASAPAESACGCSEVAAPQSTAQPAAQSGNGCMQCSVCQWIYDPALGEPMQDVTPGTMWSDVPDSFLCPECGLGKDVFNPIR.

The zinc metallo-hydrolase stretch occupies residues 30–210 (LQGSSYNSYL…PFSRLVTAKI (181 aa)). 6 residues coordinate Fe cation: H79, E81, D83, H147, D166, and H227. In terms of domain architecture, Flavodoxin-like spans 254–393 (ITLFYDTMSN…ICREHGREIA (140 aa)). Residues 260–264 (TMSNN) and 342–369 (AFGS…ETTL) contribute to the FMN site. The Rubredoxin-like domain occupies 451-502 (NGCMQCSVCQWIYDPALGEPMQDVTPGTMWSDVPDSFLCPECGLGKDVFNPI). Fe cation contacts are provided by C456, C459, C489, and C492.

This sequence in the N-terminal section; belongs to the zinc metallo-hydrolase group 3 family. In terms of assembly, homotetramer. Fe cation serves as cofactor. The cofactor is FMN.

The protein localises to the cytoplasm. It functions in the pathway nitrogen metabolism; nitric oxide reduction. Functionally, anaerobic nitric oxide reductase; uses NADH to detoxify nitric oxide (NO), protecting several 4Fe-4S NO-sensitive enzymes. Has at least 2 reductase partners, only one of which (NorW, flavorubredoxin reductase) has been identified. NO probably binds to the di-iron center; electrons enter from the NorW at rubredoxin and are transferred sequentially to the FMN center and the di-iron center. Also able to function as an aerobic oxygen reductase. This Pectobacterium carotovorum subsp. carotovorum (strain PC1) protein is Anaerobic nitric oxide reductase flavorubredoxin.